Consider the following 426-residue polypeptide: MVVDKIQAIRGMNDVLPDSTSVWRFIEQTFINCLVRYGYKEIRFPIVENTQLFKRTIGEITDIVEKEMYTFNDLNGDSITLRPEGTAGCVRACIEHGLLHNQQQKLWYLGPMFRHERPQKGRYRQFNQFGVEALGITGTAIELELISICRRLWTDLGFSQSVQLQVNSLGEINERQKYRSILVEYLHDHFHILDEDSKRRLDKNPLRVLDSKNPDLQHLIQNAPKLIDVLGDDSREHFQSFCNGLETLGIPYSINPVLVRGLDYYGQTVFEWVTDQLGSQATICAGGRYDMLVEFLGGAPTPAVGFALGLERIFLLMETLNLLNESNNKQSIFIIATNEEAILKALVMAESIRNAHPSLDVITNTAGGGFKSQFKKADKSGARMALILGEDEIAREYVSIKDLRTEIEQISIPMTKINEFLQNYLA.

Belongs to the class-II aminoacyl-tRNA synthetase family. As to quaternary structure, homodimer.

The protein resides in the cytoplasm. It catalyses the reaction tRNA(His) + L-histidine + ATP = L-histidyl-tRNA(His) + AMP + diphosphate + H(+). In Legionella pneumophila (strain Paris), this protein is Histidine--tRNA ligase.